The sequence spans 407 residues: 1-deoxy-D-xylulose 5-phosphate reductoisomerase (407 aa).

6 residues coordinate NADPH: T25, G26, S27, I28, N53, and N136. 1-deoxy-D-xylulose 5-phosphate is bound at residue K137. Residue E138 coordinates NADPH. D162 contributes to the Mn(2+) binding site. 1-deoxy-D-xylulose 5-phosphate is bound by residues S163, E164, S188, and H211. E164 serves as a coordination point for Mn(2+). Residue G217 coordinates NADPH. The 1-deoxy-D-xylulose 5-phosphate site is built by S224, N229, K230, and E233. Position 233 (E233) interacts with Mn(2+).

The protein belongs to the DXR family. It depends on Mg(2+) as a cofactor. The cofactor is Mn(2+).

The enzyme catalyses 2-C-methyl-D-erythritol 4-phosphate + NADP(+) = 1-deoxy-D-xylulose 5-phosphate + NADPH + H(+). The protein operates within isoprenoid biosynthesis; isopentenyl diphosphate biosynthesis via DXP pathway; isopentenyl diphosphate from 1-deoxy-D-xylulose 5-phosphate: step 1/6. In terms of biological role, catalyzes the NADPH-dependent rearrangement and reduction of 1-deoxy-D-xylulose-5-phosphate (DXP) to 2-C-methyl-D-erythritol 4-phosphate (MEP). This chain is 1-deoxy-D-xylulose 5-phosphate reductoisomerase, found in Rhodopseudomonas palustris (strain TIE-1).